We begin with the raw amino-acid sequence, 725 residues long: Probable dipeptidyl-peptidase 5 (725 aa).

A signal peptide spans 1–18 (MGALRWLSIAATASTALA). 6 N-linked (GlcNAc...) asparagine glycosylation sites follow: Asn75, Asn96, Asn153, Asn258, Asn383, and Asn453. Ser563 functions as the Charge relay system in the catalytic mechanism. A glycan (N-linked (GlcNAc...) asparagine) is linked at Asn610. Catalysis depends on charge relay system residues Asp646 and His678.

The protein belongs to the peptidase S9C family.

The protein localises to the secreted. Functionally, extracellular dipeptidyl-peptidase which removes N-terminal dipeptides sequentially from polypeptides having unsubstituted N-termini. This chain is Probable dipeptidyl-peptidase 5 (dpp5), found in Aspergillus flavus (strain ATCC 200026 / FGSC A1120 / IAM 13836 / NRRL 3357 / JCM 12722 / SRRC 167).